Here is a 132-residue protein sequence, read N- to C-terminus: mRNA interferase toxin YafO (132 aa).

As to quaternary structure, probably forms a complex with the antitoxin YafN which inhibits the mRNA interferase activity.

Its function is as follows. Toxic component of a type II toxin-antitoxin (TA) system. A translation-dependent mRNA interferase. Overexpression causes cessation of cell growth and inhibits cell proliferation via inhibition of translation; this blockage is overcome by subsequent expression of antitoxin YafN. Overexpression causes cleavage of a number of mRNAs in a ribosome-dependent fashion. YafO binding to the 50S ribosomal subunit in the translation complex induces mRNA cleavage 3' to the region protected by the ribosome; YafO alone is not able to digest mRNA. In Escherichia coli (strain K12), this protein is mRNA interferase toxin YafO (yafO).